Consider the following 370-residue polypeptide: Formate dehydrogenase (370 aa).

Residues Ile94 and Asn120 each contribute to the substrate site. NAD(+) is bound by residues 175–176, Asp196, 231–235, Thr257, Asp283, and 312–315; these read RI, PLHES, and HMSG.

It belongs to the D-isomer specific 2-hydroxyacid dehydrogenase family. FDH subfamily. Homodimer.

It is found in the cytoplasm. The enzyme catalyses formate + NAD(+) = CO2 + NADH. Its function is as follows. Catalyzes the NAD(+)-dependent oxidation of formate to carbon dioxide. Formate oxidation is the final step in the methanol oxidation pathway in methylotrophic microorganisms. Has a role in the detoxification of exogenous formate in non-methylotrophic organisms. In Chaetomium thermophilum (strain DSM 1495 / CBS 144.50 / IMI 039719) (Thermochaetoides thermophila), this protein is Formate dehydrogenase.